We begin with the raw amino-acid sequence, 157 residues long: 2-C-methyl-D-erythritol 2,4-cyclodiphosphate synthase (157 aa).

Positions 8 and 10 each coordinate a divalent metal cation. 4-CDP-2-C-methyl-D-erythritol 2-phosphate contacts are provided by residues 8-10 (DVH) and 34-35 (HS). His42 lines the a divalent metal cation pocket. Residues 56-58 (DIG), 61-65 (FPDTD), 100-106 (AQAPKMA), 132-135 (TTTE), Phe139, and Arg142 contribute to the 4-CDP-2-C-methyl-D-erythritol 2-phosphate site.

Belongs to the IspF family. In terms of assembly, homotrimer. Requires a divalent metal cation as cofactor.

It carries out the reaction 4-CDP-2-C-methyl-D-erythritol 2-phosphate = 2-C-methyl-D-erythritol 2,4-cyclic diphosphate + CMP. It functions in the pathway isoprenoid biosynthesis; isopentenyl diphosphate biosynthesis via DXP pathway; isopentenyl diphosphate from 1-deoxy-D-xylulose 5-phosphate: step 4/6. Involved in the biosynthesis of isopentenyl diphosphate (IPP) and dimethylallyl diphosphate (DMAPP), two major building blocks of isoprenoid compounds. Catalyzes the conversion of 4-diphosphocytidyl-2-C-methyl-D-erythritol 2-phosphate (CDP-ME2P) to 2-C-methyl-D-erythritol 2,4-cyclodiphosphate (ME-CPP) with a corresponding release of cytidine 5-monophosphate (CMP). This chain is 2-C-methyl-D-erythritol 2,4-cyclodiphosphate synthase, found in Ectopseudomonas mendocina (strain ymp) (Pseudomonas mendocina).